The sequence spans 184 residues: UPF0398 protein BALH_1408 (184 aa).

The protein belongs to the UPF0398 family.

This Bacillus thuringiensis (strain Al Hakam) protein is UPF0398 protein BALH_1408.